The sequence spans 268 residues: Ribosomal RNA small subunit methyltransferase A (268 aa).

Asn18, Leu20, Gly45, Glu66, Asp91, and Asn112 together coordinate S-adenosyl-L-methionine.

The protein belongs to the class I-like SAM-binding methyltransferase superfamily. rRNA adenine N(6)-methyltransferase family. RsmA subfamily.

The protein resides in the cytoplasm. It catalyses the reaction adenosine(1518)/adenosine(1519) in 16S rRNA + 4 S-adenosyl-L-methionine = N(6)-dimethyladenosine(1518)/N(6)-dimethyladenosine(1519) in 16S rRNA + 4 S-adenosyl-L-homocysteine + 4 H(+). Specifically dimethylates two adjacent adenosines (A1518 and A1519) in the loop of a conserved hairpin near the 3'-end of 16S rRNA in the 30S particle. May play a critical role in biogenesis of 30S subunits. The polypeptide is Ribosomal RNA small subunit methyltransferase A (Pseudoalteromonas translucida (strain TAC 125)).